The chain runs to 481 residues: Probable glycine dehydrogenase (decarboxylating) subunit 2 (481 aa).

K269 carries the post-translational modification N6-(pyridoxal phosphate)lysine.

Belongs to the GcvP family. C-terminal subunit subfamily. As to quaternary structure, the glycine cleavage system is composed of four proteins: P, T, L and H. In this organism, the P 'protein' is a heterodimer of two subunits. Pyridoxal 5'-phosphate is required as a cofactor.

The enzyme catalyses N(6)-[(R)-lipoyl]-L-lysyl-[glycine-cleavage complex H protein] + glycine + H(+) = N(6)-[(R)-S(8)-aminomethyldihydrolipoyl]-L-lysyl-[glycine-cleavage complex H protein] + CO2. The glycine cleavage system catalyzes the degradation of glycine. The P protein binds the alpha-amino group of glycine through its pyridoxal phosphate cofactor; CO(2) is released and the remaining methylamine moiety is then transferred to the lipoamide cofactor of the H protein. This Chlorobium chlorochromatii (strain CaD3) protein is Probable glycine dehydrogenase (decarboxylating) subunit 2.